Consider the following 168-residue polypeptide: DNA-binding protein inhibitor ID-1 (168 aa).

The bHLH domain occupies 46–98 (LPALLDEQQVNVLLYDMNGCYSRLKELVPTLPQNRKVSKVEILQHVIDYIRDL). Residues 53 to 106 (QQVNVLLYDMNGCYSRLKELVPTLPQNRKVSKVEILQHVIDYIRDLQLELNSES) are interaction with IFI204. The Nuclear export signal signature appears at 91–104 (VIDYIRDLQLELNS).

In terms of assembly, heterodimer with other HLH proteins. Interacts with CLOCK and BMAL1. Interacts with COPS5, IFI204, GATA4 and NKX2-5. In terms of processing, polyubiquitinated; which is favored by Ifi204 and leads to proteasomal degradation.

Its subcellular location is the cytoplasm. The protein localises to the nucleus. Functionally, transcriptional regulator (lacking a basic DNA binding domain) which negatively regulates the basic helix-loop-helix (bHLH) transcription factors by forming heterodimers and inhibiting their DNA binding and transcriptional activity. Implicated in regulating a variety of cellular processes, including cellular growth, senescence, differentiation, apoptosis, angiogenesis, and neoplastic transformation. Inhibits skeletal muscle and cardiac myocyte differentiation. Regulates the circadian clock by repressing the transcriptional activator activity of the CLOCK-BMAL1 heterodimer. This is DNA-binding protein inhibitor ID-1 (Id1) from Mus musculus (Mouse).